Consider the following 361-residue polypeptide: Holliday junction branch migration complex subunit RuvB (361 aa).

The disordered stretch occupies residues 1–25 (MSIHTDDFGQGGFAQGGFPPDKAPD). Residues 5–207 (TDDFGQGGFA…FGIVARLEFY (203 aa)) are large ATPase domain (RuvB-L). Residues Leu-46, Arg-47, Gly-88, Lys-91, Thr-92, Thr-93, 154-156 (EDY), Arg-197, Tyr-207, and Arg-244 contribute to the ATP site. Thr-92 is a Mg(2+) binding site. A small ATPAse domain (RuvB-S) region spans residues 208 to 278 (TAEELARIVR…LADRALAMLD (71 aa)). The head domain (RuvB-H) stretch occupies residues 281–361 (PQGFDIMDRK…GLPVPGDDAS (81 aa)). DNA is bound by residues Arg-336 and Arg-341.

The protein belongs to the RuvB family. In terms of assembly, homohexamer. Forms an RuvA(8)-RuvB(12)-Holliday junction (HJ) complex. HJ DNA is sandwiched between 2 RuvA tetramers; dsDNA enters through RuvA and exits via RuvB. An RuvB hexamer assembles on each DNA strand where it exits the tetramer. Each RuvB hexamer is contacted by two RuvA subunits (via domain III) on 2 adjacent RuvB subunits; this complex drives branch migration. In the full resolvosome a probable DNA-RuvA(4)-RuvB(12)-RuvC(2) complex forms which resolves the HJ.

It localises to the cytoplasm. It carries out the reaction ATP + H2O = ADP + phosphate + H(+). Its function is as follows. The RuvA-RuvB-RuvC complex processes Holliday junction (HJ) DNA during genetic recombination and DNA repair, while the RuvA-RuvB complex plays an important role in the rescue of blocked DNA replication forks via replication fork reversal (RFR). RuvA specifically binds to HJ cruciform DNA, conferring on it an open structure. The RuvB hexamer acts as an ATP-dependent pump, pulling dsDNA into and through the RuvAB complex. RuvB forms 2 homohexamers on either side of HJ DNA bound by 1 or 2 RuvA tetramers; 4 subunits per hexamer contact DNA at a time. Coordinated motions by a converter formed by DNA-disengaged RuvB subunits stimulates ATP hydrolysis and nucleotide exchange. Immobilization of the converter enables RuvB to convert the ATP-contained energy into a lever motion, pulling 2 nucleotides of DNA out of the RuvA tetramer per ATP hydrolyzed, thus driving DNA branch migration. The RuvB motors rotate together with the DNA substrate, which together with the progressing nucleotide cycle form the mechanistic basis for DNA recombination by continuous HJ branch migration. Branch migration allows RuvC to scan DNA until it finds its consensus sequence, where it cleaves and resolves cruciform DNA. This Delftia acidovorans (strain DSM 14801 / SPH-1) protein is Holliday junction branch migration complex subunit RuvB.